We begin with the raw amino-acid sequence, 143 residues long: MQCLTITAVQRERDTQSLSVITAELEPVRAPSLIAFFHGHSACMCPFRWRYSRFSLKQQRILAHDPVNTFGIDRRHTIKFCLSAKQRPYPTITIRWQLSDNMVYTEKHIRIISVTTAAAIHPVIGSSENDVQLRTRHPETTAD.

This is Insertion element IS2 uncharacterized 16.4 kDa protein from Escherichia coli.